The chain runs to 431 residues: Enolase (431 aa).

Residue Gln167 participates in (2R)-2-phosphoglycerate binding. Glu209 (proton donor) is an active-site residue. Residues Asp246, Glu290, and Asp317 each coordinate Mg(2+). The (2R)-2-phosphoglycerate site is built by Lys342, Arg371, Ser372, and Lys393. The Proton acceptor role is filled by Lys342.

Belongs to the enolase family. In terms of assembly, component of the RNA degradosome, a multiprotein complex involved in RNA processing and mRNA degradation. Mg(2+) serves as cofactor.

The protein localises to the cytoplasm. It localises to the secreted. It is found in the cell surface. It carries out the reaction (2R)-2-phosphoglycerate = phosphoenolpyruvate + H2O. It functions in the pathway carbohydrate degradation; glycolysis; pyruvate from D-glyceraldehyde 3-phosphate: step 4/5. Catalyzes the reversible conversion of 2-phosphoglycerate (2-PG) into phosphoenolpyruvate (PEP). It is essential for the degradation of carbohydrates via glycolysis. This chain is Enolase, found in Enterobacter sp. (strain 638).